The sequence spans 363 residues: tRNA N6-adenosine threonylcarbamoyltransferase (363 aa).

Residues histidine 121 and histidine 125 each contribute to the Fe cation site. Substrate contacts are provided by residues 143–147, aspartate 176, glycine 189, and asparagine 287; that span reads LASGG. Aspartate 315 contributes to the Fe cation binding site.

This sequence belongs to the KAE1 / TsaD family. The cofactor is Fe(2+).

The protein resides in the cytoplasm. It carries out the reaction L-threonylcarbamoyladenylate + adenosine(37) in tRNA = N(6)-L-threonylcarbamoyladenosine(37) in tRNA + AMP + H(+). Its function is as follows. Required for the formation of a threonylcarbamoyl group on adenosine at position 37 (t(6)A37) in tRNAs that read codons beginning with adenine. Is involved in the transfer of the threonylcarbamoyl moiety of threonylcarbamoyl-AMP (TC-AMP) to the N6 group of A37, together with TsaE and TsaB. TsaD likely plays a direct catalytic role in this reaction. The protein is tRNA N6-adenosine threonylcarbamoyltransferase of Rhodopseudomonas palustris (strain TIE-1).